Reading from the N-terminus, the 300-residue chain is Porphobilinogen deaminase (300 aa).

S-(dipyrrolylmethanemethyl)cysteine is present on Cys243.

The protein belongs to the HMBS family. As to quaternary structure, monomer. Requires dipyrromethane as cofactor.

It carries out the reaction 4 porphobilinogen + H2O = hydroxymethylbilane + 4 NH4(+). Its pathway is porphyrin-containing compound metabolism; protoporphyrin-IX biosynthesis; coproporphyrinogen-III from 5-aminolevulinate: step 2/4. Its function is as follows. Tetrapolymerization of the monopyrrole PBG into the hydroxymethylbilane pre-uroporphyrinogen in several discrete steps. This chain is Porphobilinogen deaminase, found in Clostridium novyi (strain NT).